Here is a 138-residue protein sequence, read N- to C-terminus: Superoxide dismutase [Mn] (138 aa).

Mn(2+) contacts are provided by glutamine 1, histidine 49, aspartate 133, and histidine 137.

Belongs to the iron/manganese superoxide dismutase family. Mn(2+) is required as a cofactor.

It catalyses the reaction 2 superoxide + 2 H(+) = H2O2 + O2. Functionally, destroys superoxide anion radicals which are normally produced within the cells and which are toxic to biological systems. The protein is Superoxide dismutase [Mn] (sodA) of Mycobacteroides chelonae (Mycobacterium chelonae).